The following is a 7524-amino-acid chain: Mucin-19 (7524 aa).

A signal peptide spans 1–20; that stretch reads MKLILLYLAVVLCFVGKGAA. Residues 20–47 are disordered; the sequence is ARSPTTTRTPTPSTSEKASHVPEATPTY. The span at 21–34 shows a compositional bias: low complexity; it reads RSPTTTRTPTPSTS. A VWFD 1 domain is found at 55–225; sequence GEATMWGKDK…VCEDGVQYCD (171 aa). A disulfide bridge links Cys79 with Cys224. The region spanning 298–353 is the TIL domain; the sequence is CPGKHIYKECGPSNPPTCSNVAPFQDSECVSGCTCPEGYLLDDIGEKGKCVLKEKC. VWFD domains are found at residues 392 to 568 and 851 to 1025; these read GICK…EGSP and STCH…QECS. 6 disulfide bridges follow: Cys394–Cys529, Cys434–Cys442, Cys853–Cys989, Cys875–Cys1024, Cys884–Cys986, and Cys900–Cys907. Residues 1244-1261 show a composition bias toward low complexity; that stretch reads AAATRASSSTSGSVETSV. 2 disordered regions span residues 1244–7217 and 7249–7297; these read AAAT…SSLA and SVIK…CPDS. A compositionally biased stretch (polar residues) spans 1262–1289; it reads PATTSTSKAQAHITTASSTETSALNSTA. 2 stretches are compositionally biased toward low complexity: residues 1320-7099 and 7112-7217; these read PAVS…AGSG and STSG…SSLA. Tandem repeats lie at residues 1321 to 1483, 1484 to 1646, 1647 to 1809, 1810 to 1972, 1973 to 2135, 2136 to 2298, 2299 to 2461, 2462 to 2624, 2625 to 2787, 2788 to 2950, 2951 to 3113, 3114 to 3276, 3277 to 3439, 3440 to 3602, 3603 to 3765, 3766 to 3928, 3929 to 4091, 4092 to 4254, 4255 to 4417, 4418 to 4580, 4581 to 4743, 4744 to 4906, 4907 to 5069, 5070 to 5232, 5233 to 5395, 5396 to 5558, 5559 to 5721, 5722 to 5884, 5885 to 6047, 6048 to 6210, 6211 to 6373, 6374 to 6536, 6537 to 6699, 6700 to 6862, 6863 to 7025, and 7026 to 7188. The segment at 1321–7188 is approximate repeats; sequence AVSTTSAGST…AETAGSTTGP (5868 aa). Residues 7261–7291 are compositionally biased toward polar residues; it reads AKSNETTGRTTSMPASTSVAPGVTTSPNISQ. VWFC domains lie at 7302–7368 and 7370–7432; these read PVCH…GHCE and RTCL…YKCK. 4 disulfides stabilise this stretch: Cys7435–Cys7482, Cys7449–Cys7496, Cys7458–Cys7512, and Cys7462–Cys7514. The region spanning 7435–7519 is the CTCK domain; it reads CRTTPVNVTV…TTCSCRDQCE (85 aa).

Specifically expressed in sublingual salivary glands. Expressed by mucous cells of the submandibular gland and submucosal gland of the trachea. Expression is altered in sld (sublingual gland differentiation arrest) mutants.

It localises to the secreted. Functionally, may function in ocular mucus homeostasis. This is Mucin-19 (Muc19) from Mus musculus (Mouse).